The chain runs to 334 residues: Ornithine carbamoyltransferase, catabolic (334 aa).

Residues 57–60 (STRT), glutamine 84, arginine 108, and 135–138 (HPTQ) contribute to the carbamoyl phosphate site. L-ornithine is bound by residues asparagine 169, aspartate 233, and 237–238 (SM). Carbamoyl phosphate-binding positions include 275–276 (CL) and arginine 320.

It belongs to the aspartate/ornithine carbamoyltransferase superfamily. OTCase family.

It is found in the cytoplasm. The enzyme catalyses carbamoyl phosphate + L-ornithine = L-citrulline + phosphate + H(+). It participates in amino-acid degradation; L-arginine degradation via ADI pathway; carbamoyl phosphate from L-arginine: step 2/2. In terms of biological role, reversibly catalyzes the transfer of the carbamoyl group from carbamoyl phosphate (CP) to the N(epsilon) atom of ornithine (ORN) to produce L-citrulline. This is Ornithine carbamoyltransferase, catabolic (arcB) from Salmonella typhimurium (strain LT2 / SGSC1412 / ATCC 700720).